A 360-amino-acid chain; its full sequence is Peptide chain release factor 1 (360 aa).

Position 235 is an N5-methylglutamine (Q235).

The protein belongs to the prokaryotic/mitochondrial release factor family. Methylated by PrmC. Methylation increases the termination efficiency of RF1.

Its subcellular location is the cytoplasm. Its function is as follows. Peptide chain release factor 1 directs the termination of translation in response to the peptide chain termination codons UAG and UAA. The sequence is that of Peptide chain release factor 1 from Methylobacillus flagellatus (strain ATCC 51484 / DSM 6875 / VKM B-1610 / KT).